A 130-amino-acid polypeptide reads, in one-letter code: Glycine cleavage system H protein (130 aa).

Positions 24-106 (IYSVGITEHA…YTDGWLFRIK (83 aa)) constitute a Lipoyl-binding domain. At Lys65 the chain carries N6-lipoyllysine.

This sequence belongs to the GcvH family. In terms of assembly, the glycine cleavage system is composed of four proteins: P, T, L and H. The cofactor is (R)-lipoate.

Its function is as follows. The glycine cleavage system catalyzes the degradation of glycine. The H protein shuttles the methylamine group of glycine from the P protein to the T protein. In Pectobacterium atrosepticum (strain SCRI 1043 / ATCC BAA-672) (Erwinia carotovora subsp. atroseptica), this protein is Glycine cleavage system H protein.